The primary structure comprises 188 residues: Elongation factor P (188 aa).

The protein belongs to the elongation factor P family.

It localises to the cytoplasm. It functions in the pathway protein biosynthesis; polypeptide chain elongation. Functionally, involved in peptide bond synthesis. Stimulates efficient translation and peptide-bond synthesis on native or reconstituted 70S ribosomes in vitro. Probably functions indirectly by altering the affinity of the ribosome for aminoacyl-tRNA, thus increasing their reactivity as acceptors for peptidyl transferase. The protein is Elongation factor P of Phenylobacterium zucineum (strain HLK1).